Here is a 314-residue protein sequence, read N- to C-terminus: Olfactory receptor 5G29 (314 aa).

Topologically, residues 1–25 (MEEKNQTIVMEFFFLGLTDHLYQKI) are extracellular. Residue N5 is glycosylated (N-linked (GlcNAc...) asparagine). Residues 26–46 (ALFITILFVYLVTLGGNLGMI) form a helical membrane-spanning segment. Residues 47-54 (TLIWADPR) are Cytoplasmic-facing. A helical membrane pass occupies residues 55-75 (LHTPMYFFLSHLSFVDMCSSS). The Extracellular portion of the chain corresponds to 76–99 (SIAPKMLCDIFAEEKRISFMGCAA). C97 and C189 are joined by a disulfide. The helical transmembrane segment at 100–120 (QMWFFGFFVGTECFLLASMAY) threads the bilayer. At 121-133 (DRYTAICKPLLYT) the chain is on the cytoplasmic side. The helical transmembrane segment at 134-154 (LLMSQRVCVHLVVGPYVFAII) threads the bilayer. Residues 155–196 (NITTHTTLAFCLPFCGSNTINHFFCDVSPLLSLACADSWVNK) are Extracellular-facing. Residues 197–217 (VVLFVLSGAIGVFSGLIIIVS) form a helical membrane-spanning segment. Residues 218 to 237 (YVSILMTIFKIQTADGKQKA) are Cytoplasmic-facing. Residues 238–258 (FSTCSSHLSAVSILYGTLFFI) form a helical membrane-spanning segment. The Extracellular segment spans residues 259–271 (YVRPSASFSLNIN). Residues 272–292 (KMISLFYTVVIPMLNPLIYSL) traverse the membrane as a helical segment. Over 293–312 (RNKEVKGAFRRKVQKKHFPA) the chain is Cytoplasmic.

This sequence belongs to the G-protein coupled receptor 1 family.

It is found in the cell membrane. Its function is as follows. Potential odorant receptor. The protein is Olfactory receptor 5G29 of Mus musculus (Mouse).